Here is a 937-residue protein sequence, read N- to C-terminus: Leucine--tRNA ligase (937 aa).

The 'HIGH' region motif lies at 34–44 (PYPSGAMHIGH). Residues 609 to 613 (KMSSS) carry the 'KMSKS' region motif.

It belongs to the class-I aminoacyl-tRNA synthetase family.

The protein resides in the cytoplasm. It carries out the reaction tRNA(Leu) + L-leucine + ATP = L-leucyl-tRNA(Leu) + AMP + diphosphate. The sequence is that of Leucine--tRNA ligase from Methanothermobacter thermautotrophicus (strain ATCC 29096 / DSM 1053 / JCM 10044 / NBRC 100330 / Delta H) (Methanobacterium thermoautotrophicum).